We begin with the raw amino-acid sequence, 229 residues long: UPF0488 protein C8orf33 (229 aa).

The span at 1 to 16 (MAALGHLAGEAAAAPG) shows a compositional bias: low complexity. Residues 1–96 (MAALGHLAGE…GEKASEKLAP (96 aa)) are disordered. An N-acetylalanine modification is found at alanine 2. Residue arginine 27 is modified to Omega-N-methylarginine. A compositionally biased stretch (basic residues) spans 69-79 (KKQKNKKKTRN). The residue at position 82 (serine 82) is a Phosphoserine.

It belongs to the UPF0488 family.

This chain is UPF0488 protein C8orf33 (C8orf33), found in Homo sapiens (Human).